The primary structure comprises 354 residues: Serum paraoxonase/lactonase 3 (354 aa).

A disulfide bond links C42 and C352. A glycan (N-linked (GlcNAc...) asparagine) is linked at N50. 2 residues coordinate Ca(2+): E53 and D54. H114 (proton acceptor) is an active-site residue. I116 lines the Ca(2+) pocket. S165 is modified (phosphoserine). Ca(2+) contacts are provided by N167, D168, N223, D268, and N269. N-linked (GlcNAc...) asparagine glycans are attached at residues N269 and N323.

Belongs to the paraoxonase family. In terms of assembly, homodimer. Ca(2+) serves as cofactor. In terms of processing, glycosylated. The signal sequence is not cleaved.

The protein localises to the secreted. It is found in the extracellular space. The enzyme catalyses a phenyl acetate + H2O = a phenol + acetate + H(+). It catalyses the reaction An aryl dialkyl phosphate + H2O = dialkyl phosphate + an aryl alcohol.. The catalysed reaction is an N-acyl-L-homoserine lactone + H2O = an N-acyl-L-homoserine + H(+). In terms of biological role, has low activity towards the organophosphate paraxon and aromatic carboxylic acid esters. Rapidly hydrolyzes lactones such as statin prodrugs (e.g. lovastatin). Hydrolyzes aromatic lactones and 5- or 6-member ring lactones with aliphatic substituents but not simple lactones or those with polar substituents. This chain is Serum paraoxonase/lactonase 3 (Pon3), found in Rattus norvegicus (Rat).